A 701-amino-acid chain; its full sequence is Polyribonucleotide nucleotidyltransferase (701 aa).

Aspartate 483 and aspartate 489 together coordinate Mg(2+). The KH domain occupies 550-609 (PRIYTLHIPTDKIRDVIGPGGKVIRGIIEQTGVKIDVEDDGTIHVASADEASANKAIQII). The S1 motif domain occupies 619-686 (GKTYLGKVVR…EGNKIKLSRK (68 aa)).

This sequence belongs to the polyribonucleotide nucleotidyltransferase family. Requires Mg(2+) as cofactor.

Its subcellular location is the cytoplasm. The catalysed reaction is RNA(n+1) + phosphate = RNA(n) + a ribonucleoside 5'-diphosphate. In terms of biological role, involved in mRNA degradation. Catalyzes the phosphorolysis of single-stranded polyribonucleotides processively in the 3'- to 5'-direction. In Solibacter usitatus (strain Ellin6076), this protein is Polyribonucleotide nucleotidyltransferase.